A 438-amino-acid polypeptide reads, in one-letter code: Chromosomal replication initiator protein DnaA (438 aa).

Positions 1-71 are domain I, interacts with DnaA modulators; sequence MTTKEFLTII…CFEIYDGSKP (71 aa). Residues 71 to 100 form a domain II region; it reads PTIEIKLSNEKKSKKEILKEQTQNESTEST. The segment at 101–315 is domain III, AAA+ region; the sequence is ILNPSYTFDS…GVLIRINASA (215 aa). The ATP site is built by glycine 145, glycine 147, lysine 148, and threonine 149. Residues 316–438 form a domain IV, binds dsDNA region; the sequence is SLLNQEITLP…LKNKIINSRE (123 aa).

This sequence belongs to the DnaA family. Oligomerizes as a right-handed, spiral filament on DNA at oriC.

The protein resides in the cytoplasm. In terms of biological role, plays an essential role in the initiation and regulation of chromosomal replication. ATP-DnaA binds to the origin of replication (oriC) to initiate formation of the DNA replication initiation complex once per cell cycle. Binds the DnaA box (a 9 base pair repeat at the origin) and separates the double-stranded (ds)DNA. Forms a right-handed helical filament on oriC DNA; dsDNA binds to the exterior of the filament while single-stranded (ss)DNA is stabiized in the filament's interior. The ATP-DnaA-oriC complex binds and stabilizes one strand of the AT-rich DNA unwinding element (DUE), permitting loading of DNA polymerase. After initiation quickly degrades to an ADP-DnaA complex that is not apt for DNA replication. Binds acidic phospholipids. The chain is Chromosomal replication initiator protein DnaA from Aliarcobacter butzleri (strain RM4018) (Arcobacter butzleri).